Here is a 253-residue protein sequence, read N- to C-terminus: MGTILDKIVEQKKVEVAELYETYSPVKEKRKTHSLVKALEQFTVIAEVKRASPSKGDINLHVDVPKQVKTYEECGAGAVSVLTDGQFFKGSFHDLETARAESNIPLLCKDFIIDKIQIDRAYEAGADLILLIVAALSKEKLNELYNYVLEKGLEAIVEVHDEQELEIAIRLNPHVIGINNRNLKTFEVDLSQTEKLGKRLNEENLLWISESGIHSKEDIIRVKRAGAKGVLVGEALMTSSSISNFFEDCKVNI.

This sequence belongs to the TrpC family.

It catalyses the reaction 1-(2-carboxyphenylamino)-1-deoxy-D-ribulose 5-phosphate + H(+) = (1S,2R)-1-C-(indol-3-yl)glycerol 3-phosphate + CO2 + H2O. The protein operates within amino-acid biosynthesis; L-tryptophan biosynthesis; L-tryptophan from chorismate: step 4/5. In Bacillus mycoides (strain KBAB4) (Bacillus weihenstephanensis), this protein is Indole-3-glycerol phosphate synthase.